A 157-amino-acid chain; its full sequence is Small ribosomal subunit protein uS7 (157 aa).

Belongs to the universal ribosomal protein uS7 family. In terms of assembly, part of the 30S ribosomal subunit. Contacts proteins S9 and S11.

In terms of biological role, one of the primary rRNA binding proteins, it binds directly to 16S rRNA where it nucleates assembly of the head domain of the 30S subunit. Is located at the subunit interface close to the decoding center, probably blocks exit of the E-site tRNA. The sequence is that of Small ribosomal subunit protein uS7 from Eikenella corrodens.